A 164-amino-acid polypeptide reads, in one-letter code: FMN reductase (NADH) RutF (164 aa).

It belongs to the non-flavoprotein flavin reductase family. RutF subfamily.

It carries out the reaction FMNH2 + NAD(+) = FMN + NADH + 2 H(+). Its function is as follows. Catalyzes the reduction of FMN to FMNH2 which is used to reduce pyrimidine by RutA via the Rut pathway. The sequence is that of FMN reductase (NADH) RutF from Shigella flexneri serotype X (strain 2002017).